The sequence spans 339 residues: Fructose-1,6-bisphosphatase class 1 (339 aa).

Mg(2+) is bound by residues Glu92, Asp114, Leu116, and Asp117. Substrate is bound by residues 117–120, Asn213, and Lys279; that span reads DGSS. Glu285 provides a ligand contact to Mg(2+).

This sequence belongs to the FBPase class 1 family. Homotetramer. Mg(2+) serves as cofactor.

The protein resides in the cytoplasm. The catalysed reaction is beta-D-fructose 1,6-bisphosphate + H2O = beta-D-fructose 6-phosphate + phosphate. Its pathway is carbohydrate biosynthesis; gluconeogenesis. This is Fructose-1,6-bisphosphatase class 1 from Acidovorax sp. (strain JS42).